The chain runs to 530 residues: Arginine--tRNA ligase (530 aa).

The 'HIGH' region motif lies at 113–123 (ANPTGPLHIGH).

This sequence belongs to the class-I aminoacyl-tRNA synthetase family. As to quaternary structure, monomer.

It localises to the cytoplasm. The catalysed reaction is tRNA(Arg) + L-arginine + ATP = L-arginyl-tRNA(Arg) + AMP + diphosphate. This is Arginine--tRNA ligase from Campylobacter jejuni subsp. doylei (strain ATCC BAA-1458 / RM4099 / 269.97).